The chain runs to 707 residues: MLDGPLFSEGPDSPRELQDEESGSCLWVQKSKLLVIEVKTISCHYSRRAASRQSMDIQASYWARGPQNRTCRLRPGSPEPPPRRPWASRVLQEATNWRAGPPAEVRAREQEKRKAASQEREAKETERKRRKAGGARRSPLGQPRPELRNALRAAQPTGFPVFSRPERFGQVGRAPRPSALPQGDPGVAWAGPWGGRRPGPPSYEAHLLLRGAAGTAPRRRWDRPPPYVAPPSYEGPHRTLGTKRGPELSRAPTSSAPVPATTRTEGGRTKKRLDPRIYRDVLGAWGLRQGRGLLGGAPGCAAARARPESCKGAVEKSSGLAAAGLNSGGDGHSQAKTTGPVTEVALSGSTISSPPRPVPRSRQHLRGSRKGKEGSEEMWLPTCWLSSPKKPPVRHSQTLPRPWAPGGTGWKESLGQREGTEHETLEVWKVTRRAHTLPRSSRGPAGREGIFVIDATCVVIKSQYVPTPRTQQRQLAPSGESCIVSDSLRQPKPCLEEEGKGAAANPSVCQKRLLSSRVLNPPSEGREFEAEGRQQGDSSLEERSSSGLGFPVGEVNPRDAPTHPGSPEHSTLGPAAPGCAGSVKGPEAAGVPRRAGGGWARTPGPYAGALREAVSRIRRHTAPDSDSDEAEDLSAHSGSSDGSDTDAPGASWRNERTLPAVGNTRPREGGKTAELGDSIGEILDVISQTEEGLVREDTRKTPQGKRE.

5 disordered regions span residues 1–22, 67–86, 94–195, 213–273, and 342–377; these read MLDG…DEES, QNRT…RRPW, ATNW…PWGG, AGTA…KKRL, and TEVA…GSEE. Residues 103–134 adopt a coiled-coil conformation; that stretch reads AEVRAREQEKRKAASQEREAKETERKRRKAGG. The segment covering 105-127 has biased composition (basic and acidic residues); that stretch reads VRAREQEKRKAASQEREAKETER. Residues 113 to 131 form a nuclear localization region; sequence RKAASQEREAKETERKRRK. Residues 186-236 form an interaction with MAGI2 region; it reads GVAWAGPWGGRRPGPPSYEAHLLLRGAAGTAPRRRWDRPPPYVAPPSYEGP. The segment at 340-434 is interaction with ACTN1; that stretch reads PVTEVALSGS…LEVWKVTRRA (95 aa). Residues 359-369 show a composition bias toward basic residues; the sequence is PRSRQHLRGSR. A Phosphoserine modification is found at Ser-387. Disordered stretches follow at residues 389-421 and 517-707; these read KKPP…EGTE and RVLN…GKRE. The interval 406-707 is interaction with CD2AP and NPHS1; it reads GGTGWKESLG…TRKTPQGKRE (302 aa). Basic and acidic residues-rich tracts occupy residues 524–544 and 692–707; these read EGRE…EERS and GLVR…GKRE.

In terms of assembly, forms a ternary complex with MAGI2 and SH3KBP1; recruits DDN to the cytoplasm. Interacts with MAGI1. Interacts with ACTN1 and may interact with WWC1. Interacts with the podocyte slit diaphragm proteins CD2AP, NPHS1 and NPHS2; the interaction with CD2AP and NPHS1 is direct. In terms of tissue distribution, specifically expressed in forebrain structures, particularly in neocortex, olfactory bulb, hippocampus, caudate-putamen, and limbic system (at protein level). Also detected in spleen, liver, kidney and placenta (at protein level).

Its subcellular location is the cell projection. It is found in the dendritic spine membrane. The protein localises to the cytoplasm. The protein resides in the endoplasmic reticulum membrane. It localises to the perikaryon. Its subcellular location is the nucleus. In terms of biological role, promotes apoptosis of kidney glomerular podocytes. Podocytes are highly specialized cells essential to the ultrafiltration of blood, resulting in the extraction of urine and the retention of protein. This chain is Dendrin (Ddn), found in Rattus norvegicus (Rat).